A 156-amino-acid chain; its full sequence is Small ribosomal subunit protein uS7 (156 aa).

The protein belongs to the universal ribosomal protein uS7 family. Part of the 30S ribosomal subunit. Contacts proteins S9 and S11.

One of the primary rRNA binding proteins, it binds directly to 16S rRNA where it nucleates assembly of the head domain of the 30S subunit. Is located at the subunit interface close to the decoding center, probably blocks exit of the E-site tRNA. In Chelativorans sp. (strain BNC1), this protein is Small ribosomal subunit protein uS7.